The following is a 420-amino-acid chain: Mannose-1-phosphate guanylyltransferase regulatory subunit alpha (420 aa).

Positions 2–251 (LKAVILIGGP…DGIWSQIKSA (250 aa)) are substrate-binding domain. GDP-alpha-D-mannose is bound by residues Glu-85 and Gln-247. The segment at 273–420 (LAKHTPGGPW…SRSFTNQIIL (148 aa)) is hexapeptide repeat domain. Residues 356 to 384 (TPSDPNPNDPRARMDSESLFKDGKLLPAI) form a C-loop region.

This sequence belongs to the transferase hexapeptide repeat family. Component of the GMPPA-GMPPB mannose-1-phosphate guanylyltransferase complex composed of 4 GMPPA subunits and 8 GMPPB subunits; the complex is organized into three layers, a central layer made up of 2 GMPPA dimers sandwiched between two layers each made up of 2 GMPPB dimers. In terms of tissue distribution, expressed in fibroblasts (at protein level).

The protein resides in the cytoplasm. Regulatory subunit of the GMPPA-GMPPB mannose-1-phosphate guanylyltransferase complex; reduces the catalytic activity of GMPPB when part of the complex. Mediates allosteric feedback inhibition of GMPPB catalytic activity upon binding GDP-alpha-D-mannose. Together with GMPPB regulates GDP-alpha-D-mannose levels. This is Mannose-1-phosphate guanylyltransferase regulatory subunit alpha from Homo sapiens (Human).